Here is a 378-residue protein sequence, read N- to C-terminus: MSGSSAKINLLGMNRSDLETFFESLGEKKFRATQLMKWMYHLGVSDFDLMTNMSKALREKLKEVAEVSVPEVIYEDISADGTRKWVMRLAGGNSIETVYIPDNGRGTLCVSSQIGCSLDCSFCSTGKQGFNRNLSSAEIIGQLWIAARSFGDYDLSKERYVTNIVFMGMGEPLLNFDNVVRACDVMMDDFGFGISKRRLTVSTSGLVPALDKLGDVTDVSLAISLHAPNNSLRDVLVPVNKKYPIEELLAACHRYLGKLSDKRRITVEYTLIAGVNDSETHAHELRDLLRDLPCKINLIPFNPFPNSGYERPSRNATLRFQKVLSDAGYVATVRTTRGDDIDAACGQLVGRVEDRTRRSQKYIPLQNINVSPDGRASV.

The active-site Proton acceptor is the E96. The region spanning 102 to 340 (DNGRGTLCVS…ATVRTTRGDD (239 aa)) is the Radical SAM core domain. A disulfide bridge links C109 with C345. [4Fe-4S] cluster contacts are provided by C116, C120, and C123. S-adenosyl-L-methionine is bound by residues 170-171 (GE), S202, 224-226 (SLH), and N302. Residue C345 is the S-methylcysteine intermediate of the active site.

The protein belongs to the radical SAM superfamily. RlmN family. The cofactor is [4Fe-4S] cluster.

The protein localises to the cytoplasm. It carries out the reaction adenosine(2503) in 23S rRNA + 2 reduced [2Fe-2S]-[ferredoxin] + 2 S-adenosyl-L-methionine = 2-methyladenosine(2503) in 23S rRNA + 5'-deoxyadenosine + L-methionine + 2 oxidized [2Fe-2S]-[ferredoxin] + S-adenosyl-L-homocysteine. The catalysed reaction is adenosine(37) in tRNA + 2 reduced [2Fe-2S]-[ferredoxin] + 2 S-adenosyl-L-methionine = 2-methyladenosine(37) in tRNA + 5'-deoxyadenosine + L-methionine + 2 oxidized [2Fe-2S]-[ferredoxin] + S-adenosyl-L-homocysteine. Specifically methylates position 2 of adenine 2503 in 23S rRNA and position 2 of adenine 37 in tRNAs. m2A2503 modification seems to play a crucial role in the proofreading step occurring at the peptidyl transferase center and thus would serve to optimize ribosomal fidelity. This is Dual-specificity RNA methyltransferase RlmN from Hahella chejuensis (strain KCTC 2396).